Reading from the N-terminus, the 114-residue chain is Ribonuclease P protein component (114 aa).

Belongs to the RnpA family. In terms of assembly, consists of a catalytic RNA component (M1 or rnpB) and a protein subunit.

The enzyme catalyses Endonucleolytic cleavage of RNA, removing 5'-extranucleotides from tRNA precursor.. Its function is as follows. RNaseP catalyzes the removal of the 5'-leader sequence from pre-tRNA to produce the mature 5'-terminus. It can also cleave other RNA substrates such as 4.5S RNA. The protein component plays an auxiliary but essential role in vivo by binding to the 5'-leader sequence and broadening the substrate specificity of the ribozyme. This Borrelia turicatae (strain 91E135) protein is Ribonuclease P protein component.